The following is a 328-amino-acid chain: 3-dehydroquinate synthase (328 aa).

It belongs to the archaeal-type DHQ synthase family.

It carries out the reaction 2-amino-2,3,7-trideoxy-D-lyxo-hept-6-ulosonate + NAD(+) + H2O = 3-dehydroquinate + NH4(+) + NADH + H(+). In terms of biological role, catalyzes the oxidative deamination and cyclization of 2-amino-3,7-dideoxy-D-threo-hept-6-ulosonic acid (ADH) to yield 3-dehydroquinate (DHQ), which is fed into the canonical shikimic pathway of aromatic amino acid biosynthesis. This chain is 3-dehydroquinate synthase, found in Methanospirillum hungatei JF-1 (strain ATCC 27890 / DSM 864 / NBRC 100397 / JF-1).